Here is a 368-residue protein sequence, read N- to C-terminus: uncharacterized protein (368 aa).

The protein belongs to the Gfo/Idh/MocA family.

This is an uncharacterized protein from Schizosaccharomyces pombe (strain 972 / ATCC 24843) (Fission yeast).